Here is a 432-residue protein sequence, read N- to C-terminus: Glutamate-1-semialdehyde 2,1-aminomutase (432 aa).

Lys-270 is subject to N6-(pyridoxal phosphate)lysine.

It belongs to the class-III pyridoxal-phosphate-dependent aminotransferase family. HemL subfamily. Homodimer. Requires pyridoxal 5'-phosphate as cofactor.

The protein localises to the cytoplasm. It carries out the reaction (S)-4-amino-5-oxopentanoate = 5-aminolevulinate. It functions in the pathway porphyrin-containing compound metabolism; protoporphyrin-IX biosynthesis; 5-aminolevulinate from L-glutamyl-tRNA(Glu): step 2/2. This is Glutamate-1-semialdehyde 2,1-aminomutase from Acinetobacter baumannii (strain ATCC 17978 / DSM 105126 / CIP 53.77 / LMG 1025 / NCDC KC755 / 5377).